Here is a 178-residue protein sequence, read N- to C-terminus: Large ribosomal subunit protein uL6 (178 aa).

This sequence belongs to the universal ribosomal protein uL6 family. Part of the 50S ribosomal subunit.

Functionally, this protein binds to the 23S rRNA, and is important in its secondary structure. It is located near the subunit interface in the base of the L7/L12 stalk, and near the tRNA binding site of the peptidyltransferase center. In Thermobifida fusca (strain YX), this protein is Large ribosomal subunit protein uL6.